The sequence spans 371 residues: Cytoplasmic tRNA 2-thiolation protein 1 (371 aa).

This sequence belongs to the TtcA family. CTU1/NCS6/ATPBD3 subfamily.

The protein localises to the cytoplasm. The protein operates within tRNA modification; 5-methoxycarbonylmethyl-2-thiouridine-tRNA biosynthesis. In terms of biological role, plays a central role in 2-thiolation of mcm(5)S(2)U at tRNA wobble positions of tRNA(Lys), tRNA(Glu) and tRNA(Gln). Directly binds tRNAs and probably acts by catalyzing adenylation of tRNAs, an intermediate required for 2-thiolation. It is unclear whether it acts as a sulfurtransferase that transfers sulfur from thiocarboxylated URM1 onto the uridine of tRNAs at wobble position. Prior mcm(5) tRNA modification by the elongator complex is required for 2-thiolation. May also be involved in protein urmylation. This chain is Cytoplasmic tRNA 2-thiolation protein 1, found in Kluyveromyces lactis (strain ATCC 8585 / CBS 2359 / DSM 70799 / NBRC 1267 / NRRL Y-1140 / WM37) (Yeast).